The chain runs to 362 residues: Aminomethyltransferase (362 aa).

It belongs to the GcvT family. The glycine cleavage system is composed of four proteins: P, T, L and H.

It carries out the reaction N(6)-[(R)-S(8)-aminomethyldihydrolipoyl]-L-lysyl-[protein] + (6S)-5,6,7,8-tetrahydrofolate = N(6)-[(R)-dihydrolipoyl]-L-lysyl-[protein] + (6R)-5,10-methylene-5,6,7,8-tetrahydrofolate + NH4(+). In terms of biological role, the glycine cleavage system catalyzes the degradation of glycine. The polypeptide is Aminomethyltransferase (Chlorobium limicola (strain DSM 245 / NBRC 103803 / 6330)).